We begin with the raw amino-acid sequence, 76 residues long: Kappa-actitoxin-Avd4l (76 aa).

Residues 1–19 form the signal peptide; that stretch reads MNKALFLCLVVLCAAVVFA. Positions 20–31 are excised as a propeptide; it reads AEDLQKAKHAPF. Cystine bridges form between Cys37/Cys72, Cys39/Cys65, and Cys55/Cys73.

Belongs to the sea anemone type 3 (BDS) potassium channel toxin family. In terms of tissue distribution, weakly expressed in the ectodermal tissue from the distal and proximal tentacles, body wall, and oral disk.

It is found in the secreted. Its subcellular location is the nematocyst. Functionally, blocks Kv3 voltage-gated potassium channels. Reduces blood pressure. The polypeptide is Kappa-actitoxin-Avd4l (Anemonia viridis (Snakelocks anemone)).